The chain runs to 273 residues: Progestin and adipoQ receptor family member 4 (273 aa).

Transmembrane regions (helical) follow at residues 52–72 (IYTH…TMPW), 79–99 (GWLG…SVLY), 115–135 (LLAL…LPII), 147–167 (PAAL…ALTA), 185–205 (LLVF…SLPC), and 245–265 (LLSV…LLWA).

The protein belongs to the ADIPOR family. In terms of assembly, interacts with CERS2 and CERS5; the interaction regulates CERS2 and CERS5 stabilities and activities and is inhibited in presence of ceramides. As to expression, relatively widely expressed in a range of tissues. Expressed in subcutaneous white adipose tissue.

It is found in the golgi apparatus membrane. In terms of biological role, plays a role in maintaining adipose tissue function through the regulation of ceramide levels. Mediates the stability of ceramide synthetases, CERS2 and CERS5, and their activities. This Homo sapiens (Human) protein is Progestin and adipoQ receptor family member 4.